A 200-amino-acid polypeptide reads, in one-letter code: Adenylate kinase (200 aa).

10 to 15 (GAGKGT) provides a ligand contact to ATP. Positions 30 to 59 (STGDMLRAAVAAETPVGLEAKAIMESGGLV) are NMP. Residues Thr-31, Arg-36, 57–59 (GLV), 85–88 (GFPR), and Gln-92 contribute to the AMP site. Residues 126 to 142 (KRAEETAARGQPVRKDD) are LID. Arg-127 lines the ATP pocket. AMP contacts are provided by Arg-139 and Arg-150. Lys-178 is an ATP binding site.

This sequence belongs to the adenylate kinase family. As to quaternary structure, monomer.

The protein localises to the cytoplasm. The catalysed reaction is AMP + ATP = 2 ADP. Its pathway is purine metabolism; AMP biosynthesis via salvage pathway; AMP from ADP: step 1/1. In terms of biological role, catalyzes the reversible transfer of the terminal phosphate group between ATP and AMP. Plays an important role in cellular energy homeostasis and in adenine nucleotide metabolism. The sequence is that of Adenylate kinase from Methylorubrum extorquens (strain PA1) (Methylobacterium extorquens).